The primary structure comprises 85 residues: Large ribosomal subunit protein bL31B (85 aa).

This sequence belongs to the bacterial ribosomal protein bL31 family. Type B subfamily. In terms of assembly, part of the 50S ribosomal subunit.

The protein is Large ribosomal subunit protein bL31B of Pseudarthrobacter chlorophenolicus (strain ATCC 700700 / DSM 12829 / CIP 107037 / JCM 12360 / KCTC 9906 / NCIMB 13794 / A6) (Arthrobacter chlorophenolicus).